Consider the following 497-residue polypeptide: Succinate-semialdehyde dehydrogenase [NADP(+)] (497 aa).

The active-site Proton acceptor is the Glu-264. Catalysis depends on Cys-298, which acts as the Nucleophile.

Belongs to the aldehyde dehydrogenase family. In terms of assembly, homotetramer.

The protein localises to the cytoplasm. It carries out the reaction succinate semialdehyde + NAD(+) + H2O = succinate + NADH + 2 H(+). It catalyses the reaction succinate semialdehyde + NADP(+) + H2O = succinate + NADPH + 2 H(+). Its pathway is amino-acid degradation; 4-aminobutanoate degradation. Its activity is regulated as follows. Inhibited by AMP, ADP anf ATP. Catalyzes the oxidation of succinate semialdehyde to succinate. Can utilize both NAD(+) or NADP(+) as a coenzyme, but has a 2.5-fold lower activity with NADP(+) than with NAD(+). Functions in a gamma-aminobutyrate (GABA) degradation pathway that allows growth utilizing GABA as a nitrogen source. Functions in the GABA shunt, which allows to bypass 2 reactions in the TCA cycle by removing alpha-ketoglutarate from the cycle and feeding succinate and NADH back into the cycle. This is Succinate-semialdehyde dehydrogenase [NADP(+)] from Saccharomyces cerevisiae (strain ATCC 204508 / S288c) (Baker's yeast).